The following is a 407-amino-acid chain: Pleckstrin homology-like domain family A member 1 (407 aa).

2 stretches are compositionally biased toward basic and acidic residues: residues Met1–Ser11 and Arg54–Pro63. The segment at Met1–Ser67 is disordered. In terms of domain architecture, PH spans Ser149–Leu184. 2 disordered regions span residues Lys188–Ala224 and Gln296–Ala407. Composition is skewed to low complexity over residues Gln189–Gln204 and Gln297–Ile319. Residues Pro312–Gln348 form a 15 X 2 AA repeats of P-Q region. A compositionally biased stretch (pro residues) spans Gln320–Gln344. An 11 X 2 AA repeats of P-H region spans residues Pro354 to His381. The segment covering Pro354–Gln384 has biased composition (basic residues). Positions His385–Gln395 are enriched in low complexity.

As to quaternary structure, interacts with RPL14, EIF3S7 and PABPC4.

Its subcellular location is the cytoplasm. The protein localises to the cytoplasmic vesicle. The protein resides in the nucleus. It is found in the nucleolus. Its function is as follows. Seems to be involved in regulation of apoptosis. May be involved in detachment-mediated programmed cell death. May mediate apoptosis during neuronal development. May be involved in regulation of anti-apoptotic effects of IGF1. May be involved in translational regulation. This chain is Pleckstrin homology-like domain family A member 1 (Phlda1), found in Rattus norvegicus (Rat).